The chain runs to 111 residues: Photosystem II reaction center Psb28 protein (111 aa).

It belongs to the Psb28 family. In terms of assembly, part of the photosystem II complex.

The protein localises to the cellular thylakoid membrane. This Gloeothece citriformis (strain PCC 7424) (Cyanothece sp. (strain PCC 7424)) protein is Photosystem II reaction center Psb28 protein.